Consider the following 331-residue polypeptide: Type II secretion system protein K (331 aa).

Positions 1-9 (MPSCRRQGG) are cleaved as a propeptide — leader sequence. Residues 8–27 (GGMALLVVLLILSVMVIIAS) traverse the membrane as a helical segment. Residues 28–331 (NMSGRLQLEL…MLRRLNGGAE (304 aa)) lie on the Periplasmic side of the membrane.

It belongs to the GSP K family. Type II secretion is composed of four main components: the outer membrane complex, the inner membrane complex, the cytoplasmic secretion ATPase and the periplasm-spanning pseudopilus. Interacts with core component ExeG. Post-translationally, cleaved by prepilin peptidase.

The protein resides in the cell inner membrane. In terms of biological role, component of the type II secretion system required for the energy-dependent secretion of extracellular factors such as proteases and toxins from the periplasm. Plays a role in pseudopilus assembly and seems to control its length. Interacts with the pseudopilus tip complex that is critical for the recognition and binding of secretion substrates. In Aeromonas hydrophila, this protein is Type II secretion system protein K (exeK).